Reading from the N-terminus, the 129-residue chain is Small ribosomal subunit protein uS11 (129 aa).

This sequence belongs to the universal ribosomal protein uS11 family. In terms of assembly, part of the 30S ribosomal subunit. Interacts with proteins S7 and S18. Binds to IF-3.

Functionally, located on the platform of the 30S subunit, it bridges several disparate RNA helices of the 16S rRNA. Forms part of the Shine-Dalgarno cleft in the 70S ribosome. This Lysinibacillus sphaericus (strain C3-41) protein is Small ribosomal subunit protein uS11.